Consider the following 293-residue polypeptide: Homoserine kinase (293 aa).

84–94 (PLSRGLGSSSA) contacts ATP.

This sequence belongs to the GHMP kinase family. Homoserine kinase subfamily.

It is found in the cytoplasm. It carries out the reaction L-homoserine + ATP = O-phospho-L-homoserine + ADP + H(+). It participates in amino-acid biosynthesis; L-threonine biosynthesis; L-threonine from L-aspartate: step 4/5. Catalyzes the ATP-dependent phosphorylation of L-homoserine to L-homoserine phosphate. The sequence is that of Homoserine kinase from Nitratiruptor sp. (strain SB155-2).